A 413-amino-acid chain; its full sequence is Multidrug resistance protein MdtA (413 aa).

Residues 1–20 (MKGSNTFRWAIAIGVVVAAA) form the signal peptide. 2 disordered regions span residues 31-57 (SPTAAPGVAAQAPHTAAAGRRGMRDGP) and 392-413 (PQTTMADEKSPSRHEGQKGARA). Residues 397-413 (ADEKSPSRHEGQKGARA) show a composition bias toward basic and acidic residues.

This sequence belongs to the membrane fusion protein (MFP) (TC 8.A.1) family. Part of a tripartite efflux system composed of MdtA, MdtB and MdtC.

The protein resides in the cell inner membrane. The protein is Multidrug resistance protein MdtA of Salmonella heidelberg (strain SL476).